The sequence spans 470 residues: uncharacterized protein (470 aa).

The first 24 residues, 1 to 24 (MKKLVGSLAAISVLSATGFSYVGY), serve as a signal peptide directing secretion.

This is an uncharacterized protein from Mycoplasma capricolum subsp. capricolum (strain California kid / ATCC 27343 / NCTC 10154).